We begin with the raw amino-acid sequence, 100 residues long: Large ribosomal subunit protein eL36A (100 aa).

Threonine 2 carries the N-acetylthreonine modification.

The protein belongs to the eukaryotic ribosomal protein eL36 family. As to quaternary structure, component of the large ribosomal subunit (LSU). Mature yeast ribosomes consist of a small (40S) and a large (60S) subunit. The 40S small subunit contains 1 molecule of ribosomal RNA (18S rRNA) and 33 different proteins (encoded by 57 genes). The large 60S subunit contains 3 rRNA molecules (25S, 5.8S and 5S rRNA) and 46 different proteins (encoded by 81 genes). In terms of processing, N-terminally acetylated by acetyltransferase NatA.

The protein localises to the cytoplasm. In terms of biological role, component of the ribosome, a large ribonucleoprotein complex responsible for the synthesis of proteins in the cell. The small ribosomal subunit (SSU) binds messenger RNAs (mRNAs) and translates the encoded message by selecting cognate aminoacyl-transfer RNA (tRNA) molecules. The large subunit (LSU) contains the ribosomal catalytic site termed the peptidyl transferase center (PTC), which catalyzes the formation of peptide bonds, thereby polymerizing the amino acids delivered by tRNAs into a polypeptide chain. The nascent polypeptides leave the ribosome through a tunnel in the LSU and interact with protein factors that function in enzymatic processing, targeting, and the membrane insertion of nascent chains at the exit of the ribosomal tunnel. In Saccharomyces cerevisiae (strain ATCC 204508 / S288c) (Baker's yeast), this protein is Large ribosomal subunit protein eL36A.